A 309-amino-acid polypeptide reads, in one-letter code: MTFPAFLSPDPTWDGDSTGGPLLLTVRFSASIPDFPLDIENPDITTAAGLKQLIRTHLPPNLSSHRLRLIYAGRGLEDATPLSVSLKLPPSPSRTPVVQEDATTVKGKGKAPIREQPRLYIHCSIGDIVLSDADLAAEAAIATTLQQEQADEDYTGRKKQQQPPPSTTSAPRGFDRLLSAGFTPSEVSALRSQFMAIQSVSRTPDTMPTGAELRELEDRWMDEGSSAMAAGVPGGGEGISFADDDGGFGAGSRGAMDDMLWGAVMGFFWPVGCAMWLRREEGVWSWRKGLAVFVGVVINVAFGAMRIMN.

Asparagine 61 is a glycosylation site (N-linked (GlcNAc...) asparagine). Disordered regions lie at residues 88–110 and 148–177; these read LPPS…GKGK and EQAD…FDRL. Helical transmembrane passes span 257 to 277 and 289 to 309; these read DDML…AMWL and GLAV…RIMN.

Belongs to the dsc3 family. In terms of assembly, component of the DSC E3 ubiquitin ligase complex composed of dscA, dscB, dscC and dscD.

It localises to the endoplasmic reticulum membrane. Its pathway is protein modification; protein ubiquitination. Functionally, component of the DSC E3 ubiquitin ligase complex which is required for the srbA transcriptional activator proteolytic cleavage to release the soluble transcription factor from the membrane in low oxygen or sterol conditions. Required for growth during hypoxia and triazole drug susceptibility, as well as for virulence in a murine model of invasive pulmonary aspergillosis (IPA). The sequence is that of DSC E3 ubiquitin ligase complex subunit C from Aspergillus fumigatus (strain ATCC MYA-4609 / CBS 101355 / FGSC A1100 / Af293) (Neosartorya fumigata).